A 127-amino-acid polypeptide reads, in one-letter code: Fluoride-specific ion channel FluC (127 aa).

4 consecutive transmembrane segments (helical) span residues 3 to 23 (LVFL…YFVG), 38 to 58 (LGTF…GHLA), 67 to 87 (FGIF…SYGL), and 102 to 122 (ISYV…GWFL). Glycine 77 and threonine 80 together coordinate Na(+).

It belongs to the fluoride channel Fluc/FEX (TC 1.A.43) family.

It localises to the cell inner membrane. It catalyses the reaction fluoride(in) = fluoride(out). Its activity is regulated as follows. Na(+) is not transported, but it plays an essential structural role and its presence is essential for fluoride channel function. In terms of biological role, fluoride-specific ion channel. Important for reducing fluoride concentration in the cell, thus reducing its toxicity. In Helicobacter acinonychis (strain Sheeba), this protein is Fluoride-specific ion channel FluC.